Consider the following 319-residue polypeptide: Glycine--tRNA ligase alpha subunit (319 aa).

It belongs to the class-II aminoacyl-tRNA synthetase family. Tetramer of two alpha and two beta subunits.

Its subcellular location is the cytoplasm. It carries out the reaction tRNA(Gly) + glycine + ATP = glycyl-tRNA(Gly) + AMP + diphosphate. The polypeptide is Glycine--tRNA ligase alpha subunit (Coxiella burnetii (strain CbuK_Q154) (Coxiella burnetii (strain Q154))).